Reading from the N-terminus, the 618-residue chain is Carbamoyl phosphate synthase large chain, C-terminal section (618 aa).

The tract at residues 1 to 78 is oligomerization domain; it reads MDMEKLKEIL…ETFVYKEQDE (78 aa). Positions 79-477 are carbamoyl phosphate synthetic domain; the sequence is SNPSDRKKVI…YKAQLSANME (399 aa). The region spanning 208 to 399 is the ATP-grasp domain; the sequence is SKLLKKLNIP…LAKLATKIML (192 aa). ATP is bound by residues Arg-244, Lys-283, Leu-285, Glu-290, Gly-315, Val-316, His-317, Ser-318, Gln-358, and Glu-370. Residues Gln-358, Glu-370, and Asn-372 each coordinate Mg(2+). Mn(2+) is bound by residues Gln-358, Glu-370, and Asn-372. Positions 476 to 618 constitute an MGS-like domain; sequence MELPIVGNVF…ELDARIKNRF (143 aa). The allosteric domain stretch occupies residues 478-618; sequence LPIVGNVFIS…ELDARIKNRF (141 aa).

Belongs to the CarB family. In terms of assembly, composed of two chains; the small (or glutamine) chain promotes the hydrolysis of glutamine to ammonia, which is used by the large (or ammonia) chain to synthesize carbamoyl phosphate. Tetramer of heterodimers (alpha,beta)4. It depends on Mg(2+) as a cofactor. The cofactor is Mn(2+).

The enzyme catalyses hydrogencarbonate + L-glutamine + 2 ATP + H2O = carbamoyl phosphate + L-glutamate + 2 ADP + phosphate + 2 H(+). The catalysed reaction is hydrogencarbonate + NH4(+) + 2 ATP = carbamoyl phosphate + 2 ADP + phosphate + 2 H(+). It participates in amino-acid biosynthesis; L-arginine biosynthesis; carbamoyl phosphate from bicarbonate: step 1/1. Its pathway is pyrimidine metabolism; UMP biosynthesis via de novo pathway; (S)-dihydroorotate from bicarbonate: step 1/3. Functionally, large subunit of the glutamine-dependent carbamoyl phosphate synthetase (CPSase). CPSase catalyzes the formation of carbamoyl phosphate from the ammonia moiety of glutamine, carbonate, and phosphate donated by ATP, constituting the first step of 2 biosynthetic pathways, one leading to arginine and/or urea and the other to pyrimidine nucleotides. The large subunit (synthetase) binds the substrates ammonia (free or transferred from glutamine from the small subunit), hydrogencarbonate and ATP and carries out an ATP-coupled ligase reaction, activating hydrogencarbonate by forming carboxy phosphate which reacts with ammonia to form carbamoyl phosphate. In Methanocaldococcus jannaschii (strain ATCC 43067 / DSM 2661 / JAL-1 / JCM 10045 / NBRC 100440) (Methanococcus jannaschii), this protein is Carbamoyl phosphate synthase large chain, C-terminal section (carB2).